A 269-amino-acid polypeptide reads, in one-letter code: MIKVEYKHTEIAVKKKLGQNFLTDRNITRKIVTESETNPDDTILEIGPGFGALTREISTITPRFTVVEKDPKLASFIRNEYPELTVIEGDFLTVDLKKIAGEKPLRVLGNIPYAITSPILFKLLENRHILLSATLMMQHEVALRITAKPRTKDYGILAVQMQAFCETKYLFRVGRKVFRPQPGVDSAVISMKPKVNDPVSDREGFSRFVRCAFHQRRKTLQNNLKKTYELDRVESSVLKQRAEELSIDEFFRLFEQIRPLMVSSADPES.

The S-adenosyl-L-methionine site is built by Asn20, Leu22, Gly47, Glu68, Asp90, and Asn110.

It belongs to the class I-like SAM-binding methyltransferase superfamily. rRNA adenine N(6)-methyltransferase family. RsmA subfamily.

It localises to the cytoplasm. It catalyses the reaction adenosine(1518)/adenosine(1519) in 16S rRNA + 4 S-adenosyl-L-methionine = N(6)-dimethyladenosine(1518)/N(6)-dimethyladenosine(1519) in 16S rRNA + 4 S-adenosyl-L-homocysteine + 4 H(+). In terms of biological role, specifically dimethylates two adjacent adenosines (A1518 and A1519) in the loop of a conserved hairpin near the 3'-end of 16S rRNA in the 30S particle. May play a critical role in biogenesis of 30S subunits. This Chlorobium phaeobacteroides (strain DSM 266 / SMG 266 / 2430) protein is Ribosomal RNA small subunit methyltransferase A.